Reading from the N-terminus, the 613-residue chain is Arginine--tRNA ligase (613 aa).

Positions 123–133 (PNVAKPMHVGH) match the 'HIGH' region motif.

Belongs to the class-I aminoacyl-tRNA synthetase family. In terms of assembly, monomer.

It localises to the cytoplasm. It catalyses the reaction tRNA(Arg) + L-arginine + ATP = L-arginyl-tRNA(Arg) + AMP + diphosphate. The polypeptide is Arginine--tRNA ligase (Caulobacter sp. (strain K31)).